A 21-amino-acid polypeptide reads, in one-letter code: Cupiennin-6d (21 aa).

Position 21 is a serine amide (Ser21).

Expressed by the venom gland.

The protein resides in the secreted. The protein is Cupiennin-6d of Cupiennius salei (American wandering spider).